The chain runs to 150 residues: Galactose-binding lectin (150 aa).

2 residues coordinate D-galactose: H16 and G19. The N-linked (GlcNAc...) asparagine glycan is linked to N26. Residues N27, 35-37 (DIH), H64, and G67 contribute to the D-galactose site. N74 carries N-linked (GlcNAc...) asparagine glycosylation. D-galactose contacts are provided by residues E75, 83–85 (DRH), H108, and G111. N118 carries an N-linked (GlcNAc...) asparagine glycan. D-galactose is bound by residues N119 and 127–129 (DKH).

In terms of assembly, monomer in solution. Homodimer in solution. Exists as a monomer in solution when a low concentration (0.001 mg/ml) of it is present. Homodimers start to appear at a concentration of 0.01 mg/ml and tetramers at a concentration of 0.1 mg/ml. In terms of tissue distribution, highly expressed in mantle and to a lesser extent in muscle, hepatopancreas, gill and hemocytes.

With respect to regulation, bacterial binding activity is inhibited by D-galactose. Hemagglutinating activity is independent of divalent cations Ca2(+) or Mg2(+). It is strongly inhibited by N-acetyl-D-galactosamine (GalNAc), D-galactose and D-talose, and to a lesser extent by melibiose and raffinose. Also inhibited by glycoprotein asialo-bovine submaxillary mucin (BSM). Not inhibited by D-glucose, D-fucose, D-galactitol, N-acetyl-D-glucosamine or lactose. Fungal binding activity is inhibited by D-galactose. Cytotoxic activity against Raji cell line is completely inhibited by galactose, melibiose and raffinose, but not by glucose or lactose. Galactose inhibits binding to laminin and BSM, but not to collagen, gelatin or fibronectin. Galactose-binding lectin. Binds both alpha and beta anomer of galactose (Gal), but has a stronger interaction with the glycans having alpha Gal at the non-reducing end and binds beta Gal weakly only in highly branched glycans. Has high affinity to Galalpha1-4Galbeta1-4GlcNAc. Binds N-acetyl-2-deoxy-2-amino-galactose (2-deoxy-GalNAc). Binds N-acetylgalactosamine (GalNAc). Binds porcine stomach mucin (PSM) with high affinity. Binds galactosamine. Binds laminin, bovine submaxillary mucin (BSM), fibronectin, type I collagen and gelatin with a decreasing affinity, respectively. Has hemagglutinating activity towards human type A erythrocytes. Also hemagglutinates human type 0, B and AB erythrocytes as well as rabbit and mouse erythrocytes. Agglutinates both Gram-positive and Gram-negative bacteria including B.subtilis ATCC 6633, S.aureus ATCC 21027 and E.coli 3254, respectively. No agglutination activity towards Gram-positive S.amurskyense CMM 3673. Has bacteriostatic activity on S.amurskyense CMM 3673, B.subtilis ATCC 6633, S.aureus ATCC 21027 and E.coli 3254. However, has no agglutination nor bacteriostatic activity on Gram-negative C.scophthalmum CIP 104199 or A.troitsensis KMM 3674. Inhibits growth of fungi from the genera Aspergillus, Penicillium, Trichoderma and st. Mycelia. Inhibits germination of spores and hyphal growth of them. Has dose-dependent cytotoxic effect on the human globotriaosylceramide (Gb3)-expressing Burkitt's lymphoma (Raji) cell line. Binds to Gb3 in these cells leading to activation of caspase-9/3 and PARP. Has dose-dependent cytotoxic effect on the Gb3-expressing human MCF-7 breast cancer cell line. No cytotoxic effect on myelogenous leukemia K562 cell line, which does not express Gb3. Activates immune responses in mice and increases cytokine production of TNF-alpha, IL-6 and MCP-1 in the serum and the peritoneal lavage of mice. Induces TNF-alpha and IL-6 secretion in mouse RAW264.7 macrophages, mouse bone marrow-derived macrophages, human THP-1 macrophages, human peripheral blood mononuclear cells (PBMCs) and human blood monocyte-derived macrophages. TNF-alpha production in macrophages could not be inhibited by GalNAc, GalN or Gal, indicating that induced cytokine production is separate from its sugar binding activity. Increases intracellular reactive oxygen species levels, expression and phosphorylation of protein kinases PKC alpha/delta, expression of COX-2 and NF-kappaB, and activates the MAPK pathway by increasing the phosphorylation of ERK1/2, JNK1/2 and p38 in mouse RAW264.7 macrophages. Induces endotoxin tolerance in lipopolysaccharide(LPS)-activated macrophages by down-regulating IRAK2 expression, reducing JNK1/2 phosphorylation and NF-kappaB activation. Can slightly increase the bactericidal activity of RAW264.7 macrophages. Has DNA-binding activity. Recognizes pathogen-associated molecular patterns (PAMPs) and binds to LPS from E.coli, but has only little binding to beta-1,3-glucan from E.gracilis and peptidoglycan from S.aureus. Activates secretion of TNF-alpha and IFN-gamma by the human peripheral blood cells (HPBCs). May be involved in innate immunity acting as an antibacterial and antifungal agent involved in the recognition and clearance of pathogens. The chain is Galactose-binding lectin from Crenomytilus grayanus (Gray mussel).